The primary structure comprises 574 residues: FAD-linked oxidoreductase sor8 (574 aa).

Residues M1 to A27 form the signal peptide. N-linked (GlcNAc...) asparagine glycosylation is found at N58, N112, N136, N266, N312, N363, and N384. In terms of domain architecture, FAD-binding PCMH-type spans V126–N305.

This sequence belongs to the oxygen-dependent FAD-linked oxidoreductase family. It depends on FAD as a cofactor.

It functions in the pathway secondary metabolite biosynthesis. In terms of biological role, FAD-linked oxidoreductase; part of the SOR gene cluster that mediates the biosynthesis of sorbicillinoids, a diverse group of yellow secondary metabolites that restrict growth of competing pathogenic fungi but not of bacteria. Sorbicillinoids biosynthesis requires the action of two PKSs. The SOR cluster is required for the production of trichodimerol and dihydrotrichotetronin, with sor2 being sufficient for production of trichodimerol, but not dihydrotrichotetronin in the light. Sor1 iteratively combines three acetyl units and the growing chain is modified by the ketoacyl reductase subunit, and optional by the enoyl reductase subunit in the second cycle. The polyketide is then handed over to the PKS sor2, which adds three more acetyl units, and two methyl groups. Sor2 releases an aldehyde, which undergoes spontaneous cyclization resulting in the formation of sorbicillin or 2',3'-dihydrosorbicillin. The monooxygenase sor5 oxidizes sorbicillin and 2',3'-dihydrosorbicillin to 2',3'-dihydrosorbicillinol and sorbicillinol, respectively. The oxidoreductase sor8 further converts sorbicillinol into oxosorbicillinol. Sorbicillinol is the building block for the other sorbicillinoids such as disorbicillinol, bisvertinolon, dihydrobisvertinolone, and dihydrotrichotetronine. This Hypocrea jecorina (strain QM6a) (Trichoderma reesei) protein is FAD-linked oxidoreductase sor8.